A 374-amino-acid polypeptide reads, in one-letter code: Small ribosomal subunit protein uS4m (374 aa).

Positions 259–323 (GRLENFLMRL…KKLYFFIKSK (65 aa)) constitute an S4 RNA-binding domain.

Belongs to the universal ribosomal protein uS4 family.

It localises to the mitochondrion. The sequence is that of Small ribosomal subunit protein uS4m (RPS4) from Acanthamoeba castellanii (Amoeba).